A 102-amino-acid polypeptide reads, in one-letter code: Small ribosomal subunit protein bS18c (102 aa).

The protein belongs to the bacterial ribosomal protein bS18 family. As to quaternary structure, part of the 30S ribosomal subunit.

Its subcellular location is the plastid. The protein resides in the chloroplast. In Phaseolus vulgaris (Kidney bean), this protein is Small ribosomal subunit protein bS18c.